Here is a 66-residue protein sequence, read N- to C-terminus: Large ribosomal subunit protein uL30 (66 aa).

It belongs to the universal ribosomal protein uL30 family. As to quaternary structure, part of the 50S ribosomal subunit.

This chain is Large ribosomal subunit protein uL30, found in Chloroherpeton thalassium (strain ATCC 35110 / GB-78).